An 88-amino-acid polypeptide reads, in one-letter code: DNA-directed RNA polymerase subunit omega (88 aa).

This sequence belongs to the RNA polymerase subunit omega family. As to quaternary structure, the RNAP catalytic core consists of 2 alpha, 1 beta, 1 beta' and 1 omega subunit. When a sigma factor is associated with the core the holoenzyme is formed, which can initiate transcription.

The catalysed reaction is RNA(n) + a ribonucleoside 5'-triphosphate = RNA(n+1) + diphosphate. In terms of biological role, promotes RNA polymerase assembly. Latches the N- and C-terminal regions of the beta' subunit thereby facilitating its interaction with the beta and alpha subunits. The polypeptide is DNA-directed RNA polymerase subunit omega (Actinobacillus succinogenes (strain ATCC 55618 / DSM 22257 / CCUG 43843 / 130Z)).